The following is a 906-amino-acid chain: Catenin alpha-2 (906 aa).

Over residues 866-880 the composition is skewed to basic and acidic residues; the sequence is KKPLVKREKPEEYQT. The tract at residues 866–892 is disordered; it reads KKPLVKREKPEEYQTRVRRGSQKKHIS. Residues 881–891 are compositionally biased toward basic residues; it reads RVRRGSQKKHI.

Belongs to the vinculin/alpha-catenin family. Interacts with CDH1 and CDH2. Mainly in the nervous system (at protein level).

The protein localises to the cell membrane. It localises to the cytoplasm. It is found in the cytoskeleton. Its subcellular location is the cell junction. The protein resides in the adherens junction. The protein localises to the cell projection. It localises to the axon. It is found in the nucleus. May function as a linker between cadherin adhesion receptors and the cytoskeleton to regulate cell-cell adhesion and differentiation in the nervous system. The protein is Catenin alpha-2 (CTNNA2) of Gallus gallus (Chicken).